The chain runs to 511 residues: Protein HESO1 (511 aa).

Residues 378-511 (ARPQNQQMQQ…GQIWRPRHEQ (134 aa)) form a disordered region. Residues 381–392 (QNQQMQQNWSQS) show a composition bias toward low complexity. Over residues 404-465 (LTQSRPQQNW…TSAGSSQNQG (62 aa)) the composition is skewed to polar residues.

This sequence belongs to the DNA polymerase type-B-like family.

It is found in the cytoplasm. The protein resides in the P-body. The protein localises to the nucleus. It catalyses the reaction RNA(n) + UTP = RNA(n)-3'-uridine ribonucleotide + diphosphate. Completely inhibited by 2'-O-methylation on the substrate RNA. Functionally, uridylates small RNAs to trigger their degradation. Catalyzes the uridylation of 5' fragments produced by AGO1-mediated cleavage of miRNA target RNAs. Acts synergistically with URT1 in unmethylated miRNA uridylation, leading to their degradation. URT1 and HESO1 prefer substrates with different 3' end nucleotides and act cooperatively to tail different forms of the same miRNAs. URT1 and HESO1 act sequentially, with URT1 mono-uridylating the miRNAs followed by their further uridylation by HESO1. URT1 and HESO1 are involved in the uridylation and clearance of RISC-generated 5' mRNA fragments. Able to act on AGO1-bound miRNAs and the uridylated species stay associated with AGO1. The chain is Protein HESO1 from Arabidopsis thaliana (Mouse-ear cress).